The sequence spans 369 residues: Eukaryotic translation initiation factor 3 subunit F (369 aa).

The MPN domain occupies 31–170 (VNIQPQAVFS…TKTYISAPVA (140 aa)). The segment covering 309-334 (LDEGKEGGEKKDGEGAEGDKKTDGQR) has biased composition (basic and acidic residues). The interval 309-369 (LDEGKEGGEK…EPREPREAAE (61 aa)) is disordered. Residues 335–353 (GQRGQGGKRGGRSGGAGGR) are compositionally biased toward gly residues. Over residues 354 to 369 (GGREQREPREPREAAE) the composition is skewed to basic and acidic residues.

Belongs to the eIF-3 subunit F family. As to quaternary structure, component of the eukaryotic translation initiation factor 3 (eIF-3) complex.

It is found in the cytoplasm. Functionally, component of the eukaryotic translation initiation factor 3 (eIF-3) complex, which is involved in protein synthesis of a specialized repertoire of mRNAs and, together with other initiation factors, stimulates binding of mRNA and methionyl-tRNAi to the 40S ribosome. The eIF-3 complex specifically targets and initiates translation of a subset of mRNAs involved in cell proliferation. This chain is Eukaryotic translation initiation factor 3 subunit F, found in Neurospora crassa (strain ATCC 24698 / 74-OR23-1A / CBS 708.71 / DSM 1257 / FGSC 987).